A 358-amino-acid chain; its full sequence is Phospho-N-acetylmuramoyl-pentapeptide-transferase (358 aa).

9 consecutive transmembrane segments (helical) span residues 13 to 35, 81 to 101, 106 to 126, 142 to 162, 171 to 191, 201 to 221, 228 to 248, 268 to 290, and 336 to 356; these read LLIL…IFIG, MGGV…NINL, LFLL…DDFL, FFLQ…KDLI, SWQI…LVGI, LDGL…TEIL, LIIF…FLKY, ILGS…GIFI, and IVEN…VLKI.

Belongs to the glycosyltransferase 4 family. MraY subfamily. It depends on Mg(2+) as a cofactor.

It localises to the cell inner membrane. The enzyme catalyses UDP-N-acetyl-alpha-D-muramoyl-L-alanyl-gamma-D-glutamyl-meso-2,6-diaminopimeloyl-D-alanyl-D-alanine + di-trans,octa-cis-undecaprenyl phosphate = di-trans,octa-cis-undecaprenyl diphospho-N-acetyl-alpha-D-muramoyl-L-alanyl-D-glutamyl-meso-2,6-diaminopimeloyl-D-alanyl-D-alanine + UMP. It participates in cell wall biogenesis; peptidoglycan biosynthesis. In terms of biological role, catalyzes the initial step of the lipid cycle reactions in the biosynthesis of the cell wall peptidoglycan: transfers peptidoglycan precursor phospho-MurNAc-pentapeptide from UDP-MurNAc-pentapeptide onto the lipid carrier undecaprenyl phosphate, yielding undecaprenyl-pyrophosphoryl-MurNAc-pentapeptide, known as lipid I. The polypeptide is Phospho-N-acetylmuramoyl-pentapeptide-transferase (Prochlorococcus marinus (strain MIT 9312)).